Reading from the N-terminus, the 250-residue chain is Petrobactin import ATP-binding protein FatE (250 aa).

Residues 2–236 (IKIDNVKKFY…TLLTDIFETR (235 aa)) form the ABC transporter domain. An ATP-binding site is contributed by 34-41 (GPNGAGKS).

Belongs to the ABC transporter superfamily. As to quaternary structure, the complex is composed of two ATP-binding proteins (FatE), two transmembrane proteins (FatC and FatD) and a solute-binding protein (FpuA).

It localises to the cell membrane. The catalysed reaction is a Fe(III)-siderophore(out) + ATP + H2O = a Fe(III)-siderophore(in) + ADP + phosphate + H(+). In terms of biological role, part of an ABC transporter complex involved in ferric-petrobactin uptake. Probably responsible for energy coupling to the transport system. This Bacillus anthracis protein is Petrobactin import ATP-binding protein FatE.